A 51-amino-acid polypeptide reads, in one-letter code: Large ribosomal subunit protein bL33 (51 aa).

Residues 1 to 23 (MREKIKLESSAGTGHFYTTTKNK) are disordered. Over residues 10–20 (SAGTGHFYTTT) the composition is skewed to polar residues.

This sequence belongs to the bacterial ribosomal protein bL33 family.

This Nitrosomonas eutropha (strain DSM 101675 / C91 / Nm57) protein is Large ribosomal subunit protein bL33.